A 185-amino-acid polypeptide reads, in one-letter code: Regulator of rDNA transcription protein 13 (185 aa).

3 WD repeats span residues 9 to 48 (GHTD…NNGE), 71 to 108 (GHRA…LKHF), and 111 to 148 (HTQL…LVRS).

Its function is as follows. May be involved in the modulation of rDNA transcription. This Saccharomyces cerevisiae (strain ATCC 204508 / S288c) (Baker's yeast) protein is Regulator of rDNA transcription protein 13 (RRT13).